The primary structure comprises 436 residues: Ribosomal protein uS12 methylthiotransferase RimO (436 aa).

The region spanning 2 to 117 (RNVGIISLGC…IVDVIEEVKK (116 aa)) is the MTTase N-terminal domain. Cys-11, Cys-47, Cys-80, Cys-154, Cys-158, and Cys-161 together coordinate [4Fe-4S] cluster. Residues 140-369 (TTPPYYAYLK…MEIQKQISYE (230 aa)) enclose the Radical SAM core domain. One can recognise a TRAM domain in the interval 372-436 (MSKIGTKLEV…AFEYDLVGEY (65 aa)).

This sequence belongs to the methylthiotransferase family. RimO subfamily. [4Fe-4S] cluster serves as cofactor.

It localises to the cytoplasm. It catalyses the reaction L-aspartate(89)-[ribosomal protein uS12]-hydrogen + (sulfur carrier)-SH + AH2 + 2 S-adenosyl-L-methionine = 3-methylsulfanyl-L-aspartate(89)-[ribosomal protein uS12]-hydrogen + (sulfur carrier)-H + 5'-deoxyadenosine + L-methionine + A + S-adenosyl-L-homocysteine + 2 H(+). Catalyzes the methylthiolation of an aspartic acid residue of ribosomal protein uS12. The polypeptide is Ribosomal protein uS12 methylthiotransferase RimO (Caldanaerobacter subterraneus subsp. tengcongensis (strain DSM 15242 / JCM 11007 / NBRC 100824 / MB4) (Thermoanaerobacter tengcongensis)).